A 154-amino-acid polypeptide reads, in one-letter code: Large ribosomal subunit protein uL15 (154 aa).

The disordered stretch occupies residues 17–44; that stretch reads KRVGRGIGSGTGKTGGRGVKGQRSRSGV. Positions 21–35 are enriched in gly residues; it reads RGIGSGTGKTGGRGV.

The protein belongs to the universal ribosomal protein uL15 family. In terms of assembly, part of the 50S ribosomal subunit.

In terms of biological role, binds to the 23S rRNA. The polypeptide is Large ribosomal subunit protein uL15 (Bartonella henselae (strain ATCC 49882 / DSM 28221 / CCUG 30454 / Houston 1) (Rochalimaea henselae)).